A 309-amino-acid polypeptide reads, in one-letter code: Peptide methionine sulfoxide reductase MsrA/MsrB (309 aa).

The peptide methionine sulfoxide reductase A stretch occupies residues 1-153 (MIYLAGGCFW…PNGYCHIDIN (153 aa)). The active site involves cysteine 8. In terms of domain architecture, MsrB spans 170–293 (ATEIKEKLSA…NSLSITFIPK (124 aa)). The active-site Nucleophile is the cysteine 282.

The protein in the N-terminal section; belongs to the MsrA Met sulfoxide reductase family. This sequence in the C-terminal section; belongs to the MsrB Met sulfoxide reductase family.

It carries out the reaction L-methionyl-[protein] + [thioredoxin]-disulfide + H2O = L-methionyl-(S)-S-oxide-[protein] + [thioredoxin]-dithiol. The catalysed reaction is [thioredoxin]-disulfide + L-methionine + H2O = L-methionine (S)-S-oxide + [thioredoxin]-dithiol. The enzyme catalyses L-methionyl-[protein] + [thioredoxin]-disulfide + H2O = L-methionyl-(R)-S-oxide-[protein] + [thioredoxin]-dithiol. Has an important function as a repair enzyme for proteins that have been inactivated by oxidation. Catalyzes the reversible oxidation-reduction of methionine sulfoxide in proteins to methionine. In Streptococcus pyogenes serotype M18 (strain MGAS8232), this protein is Peptide methionine sulfoxide reductase MsrA/MsrB (msrAB).